The sequence spans 1068 residues: Self-sufficient cytochrome P450 monooxygenase CYP505U2 (1068 aa).

Residue Cys408 coordinates heme. Residues 464-498 (TTAGMVPESVQSLRQAQKSGKPGNSKSSANESMVG) are disordered. Over residues 472–498 (SVQSLRQAQKSGKPGNSKSSANESMVG) the composition is skewed to polar residues. One can recognise a Flavodoxin-like domain in the interval 505 to 646 (VSIFYGSNSG…DLEKWEESIL (142 aa)). Residues 511–515 (SNSGS) and 590–622 (VFGCGHHDWATTFYKIPILIDELLEQRGAQRVA) contribute to the FMN site. An FAD-binding FR-type domain is found at 679–909 (KEFLEATVTS…RRSNPAFHPP (231 aa)).

The protein in the N-terminal section; belongs to the cytochrome P450 family. It depends on FAD as a cofactor. The cofactor is FMN. Requires heme as cofactor.

The catalysed reaction is 2 oxidized [cytochrome P450] + NADPH = 2 reduced [cytochrome P450] + NADP(+) + H(+). It carries out the reaction an organic molecule + reduced [NADPH--hemoprotein reductase] + O2 = an alcohol + oxidized [NADPH--hemoprotein reductase] + H2O + H(+). The enzyme catalyses dodecanoate + reduced [NADPH--hemoprotein reductase] + O2 = 3-hydroxydodecanoate + oxidized [NADPH--hemoprotein reductase] + H2O + H(+). It catalyses the reaction dodecanoate + reduced [NADPH--hemoprotein reductase] + O2 = 7-hydroxydodecanoate + oxidized [NADPH--hemoprotein reductase] + H2O + H(+). The catalysed reaction is dodecan-1-ol + reduced [NADPH--hemoprotein reductase] + O2 = 1,4-dodecanediol + oxidized [NADPH--hemoprotein reductase] + H2O + H(+). It carries out the reaction dodecan-1-ol + reduced [NADPH--hemoprotein reductase] + O2 = 1,3-dodecanediol + oxidized [NADPH--hemoprotein reductase] + H2O + H(+). Self-sufficient cytochrome P450 monooxygenase that catalyzes the regioselective in-chain hydroxylation of alkanes, fatty alcohols, and fatty acids. Preferentially hydroxylates 1-dodecanol at C3 and C4 (positions omega-8 and omega-9). It is very likely that CYP505U2 prefers dodecanol, and probably other fatty alcohols, over fatty acids as substrates. Does not show any significant activity toward tetradecanoic acid. This Exserohilum turcicum (strain 28A) (Northern leaf blight fungus) protein is Self-sufficient cytochrome P450 monooxygenase CYP505U2.